The primary structure comprises 990 residues: Tyrosine-protein phosphatase 3 (990 aa).

Disordered stretches follow at residues Gln-47 to Val-88, Asn-100 to Glu-193, Pro-246 to Gln-414, and Lys-431 to Leu-452. Low complexity-rich tracts occupy residues Asn-52–Val-88 and Asn-100–Asn-117. Positions Leu-127 to Lys-136 are enriched in polar residues. Low complexity-rich tracts occupy residues Asn-137–Asn-191, Ser-250–Leu-271, Asn-278–Asn-293, Gln-310–Gln-327, and Asn-334–Ser-413. The Tyrosine-protein phosphatase domain maps to Met-422–Val-715. The span at Lys-437–Tyr-447 shows a compositional bias: basic residues. Cys-650 functions as the Phosphocysteine intermediate in the catalytic mechanism. Residues Pro-786–Phe-795 are compositionally biased toward polar residues. Disordered stretches follow at residues Pro-786–Ile-814 and Leu-834–Phe-990. Composition is skewed to low complexity over residues Ser-796–Pro-806 and Leu-834–Pro-850. The span at Leu-851–Ser-868 shows a compositional bias: polar residues. Composition is skewed to low complexity over residues Asn-878–Gly-916 and Gly-924–Asn-968.

It belongs to the protein-tyrosine phosphatase family. Non-receptor class subfamily. In the anterior-like and prestalk cell types.

It is found in the cytoplasm. The catalysed reaction is O-phospho-L-tyrosyl-[protein] + H2O = L-tyrosyl-[protein] + phosphate. Seems to dephosphorylate a protein of 130 kDa (p130). The sequence is that of Tyrosine-protein phosphatase 3 (ptpC) from Dictyostelium discoideum (Social amoeba).